The following is a 662-amino-acid chain: Methyl-accepting chemotaxis protein McpB (662 aa).

At 1–16 (MKTFINWLKKPSISKK) the chain is on the cytoplasmic side. Residues 17 to 37 (LIVSFIAILIIPILILEFSSY) traverse the membrane as a helical segment. Topologically, residues 38–282 (RSASGKLDQE…IKDASKSVLT (245 aa)) are extracellular. In terms of domain architecture, Cache spans 153 to 229 (VTDPYVAASD…KAGEKLSGDW (77 aa)). A helical membrane pass occupies residues 283-303 (TGMIVLIASIVAGGILILFIV). One can recognise an HAMP domain in the interval 304–356 (RSITKPLKRLVQSSKTISRGDLTETIEIHSKDELGELGESFNEMGQSLRSLIS). Topologically, residues 304-662 (RSITKPLKRL…RDLTKQFKIE (359 aa)) are cytoplasmic. Q371 and Q595 each carry glutamate methyl ester (Gln). A Methyl-accepting transducer domain is found at 375-611 (SAGQTSKATE…HVSAAVSGIA (237 aa)). E630 and E637 each carry glutamate methyl ester (Glu).

Belongs to the methyl-accepting chemotaxis (MCP) protein family. In terms of assembly, interacts with FloT. In terms of processing, some glutamine residues are deamidated to glutamate by CheD and subsequently methylated. The demethylation is selective. Gln-371 is demethylated only upon asparagine addition whereas Glu-637 is demethylated only upon asparagine removal. Glu-630 appears indiscriminate and is demethylated upon both addition and removal of asparagine.

The protein localises to the cell membrane. Its subcellular location is the membrane raft. In terms of biological role, chemotactic-signal transducers respond to changes in the concentration of attractants and repellents in the environment, transduce a signal from the outside to the inside of the cell, and facilitate sensory adaptation through the variation of the level of methylation. All amino acids serve as attractants in B.subtilis, they appear to cause an increase in the turnover methyl groups, leading to methylation of an unidentified acceptor, while repellents have been shown to cause a decrease in methyl group turnover. The methyl groups are added by a methyltransferase and removed by a methylesterase. McpB is required for taxis towards asparagine, aspartate, glutamine, and histidine. In Bacillus subtilis (strain 168), this protein is Methyl-accepting chemotaxis protein McpB (mcpB).